The primary structure comprises 435 residues: Serine/threonine-protein kinase 40 (435 aa).

Positions 35–332 (FVLGPRLGNS…DVLEALSAII (298 aa)) constitute a Protein kinase domain. ATP is bound by residues 41-49 (LGNSPVPSI) and Lys-66. The active-site Proton acceptor is the Asp-197.

This sequence belongs to the protein kinase superfamily. CAMK Ser/Thr protein kinase family.

It localises to the nucleus. Its subcellular location is the cytoplasm. The enzyme catalyses L-seryl-[protein] + ATP = O-phospho-L-seryl-[protein] + ADP + H(+). It carries out the reaction L-threonyl-[protein] + ATP = O-phospho-L-threonyl-[protein] + ADP + H(+). Functionally, may be a negative regulator of NF-kappa-B and p53-mediated gene transcription. The polypeptide is Serine/threonine-protein kinase 40 (Stk40) (Mus musculus (Mouse)).